The chain runs to 189 residues: MLPTSGSSANLYSWMYVSGRGNPSTPESVSELNHNHFLSPELQDKLDVMVSIYSCARNNNELEEIFQELSAFVSGLMDKRNSVFEVRNENTDEVVGALRAGMTIEDRDSYIRDLFFLHSLKVKIEESRQGKEDSKCKVYNLLCPHHSSELYGDLRAMKCLVEGCSDDFNPFDIIRVPDLTYNKGSLQCG.

An interaction with host caspases region spans residues 186 to 189 (LQCG).

In terms of assembly, monomer. Interacts (via C-terminus) with human CASP4, CASP8 and CASP9.

Its subcellular location is the secreted. It is found in the host cytoplasm. Functionally, effector protein that alters host cell physiology and promotes bacterial survival in host tissues. Inhibits the catalytic activity of human CASP4, CASP8 and CASP9, and thereby inhibits apoptosis of infected host cells. The protein is Effector protein NleF (nleF) of Escherichia coli O157:H7.